A 442-amino-acid chain; its full sequence is UDP-N-acetylmuramate--L-alanine ligase (442 aa).

ATP is bound at residue 109–115 (GAHGKTS).

Belongs to the MurCDEF family.

It is found in the cytoplasm. It catalyses the reaction UDP-N-acetyl-alpha-D-muramate + L-alanine + ATP = UDP-N-acetyl-alpha-D-muramoyl-L-alanine + ADP + phosphate + H(+). It functions in the pathway cell wall biogenesis; peptidoglycan biosynthesis. Its function is as follows. Cell wall formation. This chain is UDP-N-acetylmuramate--L-alanine ligase, found in Streptococcus pyogenes serotype M3 (strain SSI-1).